The chain runs to 535 residues: CTP synthase (535 aa).

An amidoligase domain region spans residues 1–270 (MSKNTKYVFV…DRLVCEKLGL (270 aa)). Ser-16 is a binding site for CTP. UTP is bound at residue Ser-16. 17–22 (SLGKGI) is a binding site for ATP. L-glutamine is bound at residue Tyr-57. Asp-74 is a binding site for ATP. Asp-74 and Glu-144 together coordinate Mg(2+). Residues 151–153 (DIE), 191–196 (KTKPTQ), and Lys-227 each bind CTP. Residues 191-196 (KTKPTQ) and Lys-227 each bind UTP. Positions 295-535 (KIALVGKYVE…GFVGAALNNK (241 aa)) constitute a Glutamine amidotransferase type-1 domain. Gly-357 contributes to the L-glutamine binding site. Cys-384 (nucleophile; for glutamine hydrolysis) is an active-site residue. L-glutamine-binding positions include 385–388 (LGMQ), Glu-408, and Arg-465. Residues His-510 and Glu-512 contribute to the active site.

The protein belongs to the CTP synthase family. Homotetramer.

It catalyses the reaction UTP + L-glutamine + ATP + H2O = CTP + L-glutamate + ADP + phosphate + 2 H(+). The enzyme catalyses L-glutamine + H2O = L-glutamate + NH4(+). It carries out the reaction UTP + NH4(+) + ATP = CTP + ADP + phosphate + 2 H(+). It functions in the pathway pyrimidine metabolism; CTP biosynthesis via de novo pathway; CTP from UDP: step 2/2. Allosterically activated by GTP, when glutamine is the substrate; GTP has no effect on the reaction when ammonia is the substrate. The allosteric effector GTP functions by stabilizing the protein conformation that binds the tetrahedral intermediate(s) formed during glutamine hydrolysis. Inhibited by the product CTP, via allosteric rather than competitive inhibition. Catalyzes the ATP-dependent amination of UTP to CTP with either L-glutamine or ammonia as the source of nitrogen. Regulates intracellular CTP levels through interactions with the four ribonucleotide triphosphates. This is CTP synthase from Clostridium perfringens (strain ATCC 13124 / DSM 756 / JCM 1290 / NCIMB 6125 / NCTC 8237 / Type A).